Reading from the N-terminus, the 255-residue chain is BPI fold-containing family A member 1 (255 aa).

Residues 1-19 (MFHIGSLVVLCGLLAPTTA) form the signal peptide. Residues 87–92 (LLGSLL) are important for surfactant activity and antibacterial properties. Asn157, Asn178, and Asn205 each carry an N-linked (GlcNAc...) asparagine glycan. Cys179 and Cys223 form a disulfide bridge.

The protein belongs to the BPI/LBP/Plunc superfamily. Plunc family. Monomer. Interacts (via N-terminus) with SCNN1B, a subunit of the heterotrimeric epithelial sodium channel (ENaC); this inhibits proteolytic activation of ENaC. Expressed in trachea, and at lower levels in nasal epithelium.

Its subcellular location is the secreted. Functionally, lipid-binding protein which shows high specificity for the surfactant phospholipid dipalmitoylphosphatidylcholine (DPPC). Plays a role in the innate immune responses of the upper airways. Reduces the surface tension in secretions from airway epithelia and inhibits the formation of biofilm by pathogenic Gram-negative bacteria, such as P.aeruginosa and K.pneumoniae. Negatively regulates proteolytic cleavage of SCNN1G, an event that is required for activation of the epithelial sodium channel (ENaC), and thereby contributes to airway surface liquid homeostasis and proper clearance of mucus. Plays a role in the airway inflammatory response after exposure to irritants. May attract macrophages and neutrophils. In Bos taurus (Bovine), this protein is BPI fold-containing family A member 1 (BPIFA1).